Consider the following 108-residue polypeptide: Large ribosomal subunit protein bL31B (108 aa).

The segment at 88–108 (AAVEEAPAVKSKKKAPIKKKK) is disordered. Positions 97–108 (KSKKKAPIKKKK) are enriched in basic residues.

This sequence belongs to the bacterial ribosomal protein bL31 family. Type B subfamily. In terms of assembly, part of the 50S ribosomal subunit.

This chain is Large ribosomal subunit protein bL31B, found in Chlamydia abortus (strain DSM 27085 / S26/3) (Chlamydophila abortus).